Reading from the N-terminus, the 139-residue chain is Large ribosomal subunit protein bL21 (139 aa).

This sequence belongs to the bacterial ribosomal protein bL21 family. In terms of assembly, part of the 50S ribosomal subunit. Contacts protein L20.

In terms of biological role, this protein binds to 23S rRNA in the presence of protein L20. In Prochlorococcus marinus (strain NATL2A), this protein is Large ribosomal subunit protein bL21.